Here is a 333-residue protein sequence, read N- to C-terminus: 6-phosphogluconolactonase (333 aa).

This sequence belongs to the cycloisomerase 2 family.

The catalysed reaction is 6-phospho-D-glucono-1,5-lactone + H2O = 6-phospho-D-gluconate + H(+). The protein operates within carbohydrate degradation; pentose phosphate pathway; D-ribulose 5-phosphate from D-glucose 6-phosphate (oxidative stage): step 2/3. Functionally, catalyzes the hydrolysis of 6-phosphogluconolactone to 6-phosphogluconate. The polypeptide is 6-phosphogluconolactonase (Cronobacter sakazakii (strain ATCC BAA-894) (Enterobacter sakazakii)).